We begin with the raw amino-acid sequence, 80 residues long: Beta-toxin KAaH2 (80 aa).

The N-terminal stretch at 1 to 22 (MMKLMLFSIIVILFSLIGSIHG) is a signal peptide. The LCN-type CS-alpha/beta domain occupies 25–80 (VPGNYPLDSSDDTYLCAPLGENPSCIQICRKHGVKYGYCYAFQCWCEYLEDKNVKI). 3 disulfides stabilise this stretch: C40/C63, C49/C68, and C53/C70.

Belongs to the long (3 C-C) scorpion toxin superfamily. Sodium/Potassium channel inhibitor family. As to expression, expressed by the venom gland.

The protein localises to the secreted. In terms of biological role, weakly inhibits the vertebrate potassium channel Kv1.1/KCNA1. The polypeptide is Beta-toxin KAaH2 (Androctonus australis (Sahara scorpion)).